We begin with the raw amino-acid sequence, 130 residues long: Small ribosomal subunit protein uS11 (130 aa).

Belongs to the universal ribosomal protein uS11 family. As to quaternary structure, part of the 30S ribosomal subunit. Interacts with proteins S7 and S18. Binds to IF-3.

Functionally, located on the platform of the 30S subunit, it bridges several disparate RNA helices of the 16S rRNA. Forms part of the Shine-Dalgarno cleft in the 70S ribosome. This chain is Small ribosomal subunit protein uS11, found in Prochlorococcus marinus (strain MIT 9215).